Reading from the N-terminus, the 563-residue chain is Inositol-3-phosphate synthase 1-A (563 aa).

The protein belongs to the myo-inositol 1-phosphate synthase family. It depends on NAD(+) as a cofactor.

The protein localises to the cytoplasm. The enzyme catalyses D-glucose 6-phosphate = 1D-myo-inositol 3-phosphate. Its pathway is polyol metabolism; myo-inositol biosynthesis; myo-inositol from D-glucose 6-phosphate: step 1/2. Functionally, key enzyme in myo-inositol biosynthesis pathway that catalyzes the conversion of glucose 6-phosphate to 1-myo-inositol 1-phosphate in a NAD-dependent manner. Rate-limiting enzyme in the synthesis of all inositol-containing compounds. This is Inositol-3-phosphate synthase 1-A (isyna1-a) from Xenopus laevis (African clawed frog).